Consider the following 821-residue polypeptide: Leucine--tRNA ligase (821 aa).

The 'HIGH' region signature appears at 40 to 50; it reads PYPSGRIHMGH. The short motif at 586 to 590 is the 'KMSKS' region element; that stretch reads KMSKS. Lysine 589 provides a ligand contact to ATP.

Belongs to the class-I aminoacyl-tRNA synthetase family.

It localises to the cytoplasm. The catalysed reaction is tRNA(Leu) + L-leucine + ATP = L-leucyl-tRNA(Leu) + AMP + diphosphate. The chain is Leucine--tRNA ligase from Aliarcobacter butzleri (strain RM4018) (Arcobacter butzleri).